The chain runs to 150 residues: MSLQFNSVALLLVALILLGIFSQNSAVTISAAVLLIMQQTLLSKYVPYLEQYGIKIGIIILTIGVLAPLVSGRIALPELVQLINWKMIVAIIAGIVVAWLGGRGVTLMGNQPVLVTGLLIGTIIGVAFLKGVPVGPLIAAGILSLIIGKS.

A run of 5 helical transmembrane segments spans residues 1–21, 27–46, 52–72, 82–102, and 123–143; these read MSLQ…LGIF, VTIS…SKYV, YGIK…LVSG, LINW…WLGG, and IIGV…AGIL.

This sequence belongs to the UPF0756 family.

The protein localises to the cell membrane. This is UPF0756 membrane protein HAPS_1649 from Glaesserella parasuis serovar 5 (strain SH0165) (Haemophilus parasuis).